The primary structure comprises 335 residues: Holliday junction branch migration complex subunit RuvB (335 aa).

Residues 4-184 (ADRIISGQAK…FGIVQRLEFY (181 aa)) form a large ATPase domain (RuvB-L) region. Residues Ile-23, Arg-24, Gly-65, Lys-68, Thr-69, Thr-70, 131–133 (EDY), Arg-174, Tyr-184, and Arg-221 contribute to the ATP site. Position 69 (Thr-69) interacts with Mg(2+). Residues 185–255 (SVEDLTSIVA…VAKQALSMLD (71 aa)) form a small ATPAse domain (RuvB-S) region. A head domain (RuvB-H) region spans residues 258–335 (DAGFDYLDRK…RHFGLQKLSD (78 aa)). The DNA site is built by Arg-294, Arg-313, and Arg-318.

It belongs to the RuvB family. In terms of assembly, homohexamer. Forms an RuvA(8)-RuvB(12)-Holliday junction (HJ) complex. HJ DNA is sandwiched between 2 RuvA tetramers; dsDNA enters through RuvA and exits via RuvB. An RuvB hexamer assembles on each DNA strand where it exits the tetramer. Each RuvB hexamer is contacted by two RuvA subunits (via domain III) on 2 adjacent RuvB subunits; this complex drives branch migration. In the full resolvosome a probable DNA-RuvA(4)-RuvB(12)-RuvC(2) complex forms which resolves the HJ.

It localises to the cytoplasm. The enzyme catalyses ATP + H2O = ADP + phosphate + H(+). In terms of biological role, the RuvA-RuvB-RuvC complex processes Holliday junction (HJ) DNA during genetic recombination and DNA repair, while the RuvA-RuvB complex plays an important role in the rescue of blocked DNA replication forks via replication fork reversal (RFR). RuvA specifically binds to HJ cruciform DNA, conferring on it an open structure. The RuvB hexamer acts as an ATP-dependent pump, pulling dsDNA into and through the RuvAB complex. RuvB forms 2 homohexamers on either side of HJ DNA bound by 1 or 2 RuvA tetramers; 4 subunits per hexamer contact DNA at a time. Coordinated motions by a converter formed by DNA-disengaged RuvB subunits stimulates ATP hydrolysis and nucleotide exchange. Immobilization of the converter enables RuvB to convert the ATP-contained energy into a lever motion, pulling 2 nucleotides of DNA out of the RuvA tetramer per ATP hydrolyzed, thus driving DNA branch migration. The RuvB motors rotate together with the DNA substrate, which together with the progressing nucleotide cycle form the mechanistic basis for DNA recombination by continuous HJ branch migration. Branch migration allows RuvC to scan DNA until it finds its consensus sequence, where it cleaves and resolves cruciform DNA. In Haemophilus influenzae (strain PittEE), this protein is Holliday junction branch migration complex subunit RuvB.